Here is a 944-residue protein sequence, read N- to C-terminus: Tyrosine-protein kinase transmembrane receptor ROR2 (944 aa).

A signal peptide spans methionine 1–glycine 33. Residues glutamate 34–glycine 403 lie on the Extracellular side of the membrane. An Ig-like C2-type domain is found at proline 55–threonine 145. Asparagine 70 carries an N-linked (GlcNAc...) asparagine glycan. Disulfide bonds link cysteine 83-cysteine 135, cysteine 174-cysteine 239, cysteine 182-cysteine 232, cysteine 223-cysteine 264, cysteine 252-cysteine 300, cysteine 256-cysteine 286, cysteine 316-cysteine 394, cysteine 337-cysteine 377, and cysteine 365-cysteine 389. The FZ domain maps to glutamine 169–isoleucine 303. An N-linked (GlcNAc...) asparagine glycan is attached at asparagine 188. In terms of domain architecture, Kringle spans cysteine 316–cysteine 394. N-linked (GlcNAc...) asparagine glycosylation is present at asparagine 318. The helical transmembrane segment at isoleucine 404–leucine 424 threads the bilayer. Residues valine 425–alanine 944 are Cytoplasmic-facing. The 274-residue stretch at valine 473–leucine 746 folds into the Protein kinase domain. Residues leucine 479–valine 487 and lysine 507 each bind ATP. The Proton acceptor role is filled by aspartate 615. Phosphotyrosine; by autocatalysis is present on tyrosine 646. Positions serine 757 to serine 779 are disordered. Low complexity predominate over residues serine 765–serine 779. An Asymmetric dimethylarginine modification is found at arginine 785. Disordered regions lie at residues glutamine 850–serine 879 and glutamine 898–asparagine 929. The span at proline 857–glycine 872 shows a compositional bias: low complexity.

The protein belongs to the protein kinase superfamily. Tyr protein kinase family. ROR subfamily. Homodimer; promotes osteogenesis. Binds YWHAB. Interacts with WTIP. Interacts with ROR2. It depends on Mg(2+) as a cofactor.

Its subcellular location is the cell membrane. It carries out the reaction L-tyrosyl-[protein] + ATP = O-phospho-L-tyrosyl-[protein] + ADP + H(+). In terms of biological role, tyrosine-protein kinase receptor which may be involved in the early formation of the chondrocytes. It seems to be required for cartilage and growth plate development. Phosphorylates YWHAB, leading to induction of osteogenesis and bone formation. In contrast, has also been shown to have very little tyrosine kinase activity in vitro. May act as a receptor for wnt ligand WNT5A which may result in the inhibition of WNT3A-mediated signaling. The polypeptide is Tyrosine-protein kinase transmembrane receptor ROR2 (Ror2) (Mus musculus (Mouse)).